A 288-amino-acid chain; its full sequence is Polyamine aminopropyltransferase (288 aa).

The PABS domain maps to 9–238; the sequence is ETLHDQFGQY…GIMTFAWATD (230 aa). Glutamine 33 is an S-methyl-5'-thioadenosine binding site. The spermidine site is built by histidine 64 and aspartate 88. S-methyl-5'-thioadenosine is bound by residues glutamate 108 and 140–141; that span reads DG. The active-site Proton acceptor is aspartate 158. A spermidine-binding site is contributed by 158–161; it reads DCTD. Position 165 (proline 165) interacts with S-methyl-5'-thioadenosine.

It belongs to the spermidine/spermine synthase family. Homodimer or homotetramer.

It localises to the cytoplasm. It catalyses the reaction S-adenosyl 3-(methylsulfanyl)propylamine + putrescine = S-methyl-5'-thioadenosine + spermidine + H(+). It functions in the pathway amine and polyamine biosynthesis; spermidine biosynthesis; spermidine from putrescine: step 1/1. Catalyzes the irreversible transfer of a propylamine group from the amino donor S-adenosylmethioninamine (decarboxy-AdoMet) to putrescine (1,4-diaminobutane) to yield spermidine. The chain is Polyamine aminopropyltransferase from Escherichia coli O17:K52:H18 (strain UMN026 / ExPEC).